The sequence spans 588 residues: Adenine deaminase (588 aa).

Belongs to the metallo-dependent hydrolases superfamily. Adenine deaminase family. As to quaternary structure, homodimer. The cofactor is Mn(2+).

The catalysed reaction is adenine + H2O + H(+) = hypoxanthine + NH4(+). The protein is Adenine deaminase of Escherichia coli O81 (strain ED1a).